The following is an 882-amino-acid chain: Putative HTH-type transcriptional regulator Rv0890c (882 aa).

In terms of domain architecture, HTH luxR-type spans 814 to 879; sequence PARGWGSLTP…QLVDEAARRG (66 aa). The segment at residues 838–857 is a DNA-binding region (H-T-H motif); sequence NKDIAKRLFVSPRTVQTHLT.

This chain is Putative HTH-type transcriptional regulator Rv0890c, found in Mycobacterium tuberculosis (strain ATCC 25618 / H37Rv).